Reading from the N-terminus, the 555-residue chain is Protein PLASTID TRANSCRIPTIONALLY ACTIVE 12, chloroplastic (555 aa).

Residues 1–58 (MASCYNPWRLFPGMSTAVPAGPVTAPAHSRTCKSSKVFSALPHRRGLLFLGTRRARIK) constitute a chloroplast transit peptide. 3 disordered regions span residues 80–100 (YFDS…SIPG), 115–167 (ARAP…EPDV), and 468–541 (SYNE…IDDS). Residues 144–154 (QVTSASGTEGA) show a composition bias toward polar residues. Composition is skewed to acidic residues over residues 471-480 (EDSDDEDEDV) and 490-502 (LEDE…DVAE). Residues 508–519 (NQNWSALKSTGQ) show a composition bias toward polar residues. Residues 521–538 (EKPKEKSKKDEMTLKEAI) show a composition bias toward basic and acidic residues.

As to quaternary structure, component of the plastid-encoded plastid RNA polymerase (PEP) complex.

The protein localises to the plastid. It localises to the chloroplast stroma. The protein resides in the nucleus. Its function is as follows. Required for the activity of the plastid-encoded RNA polymerase (PEP) and full expression of genes transcribed by PEP. Required for the proper build-up and formation of the PEP-complex. Binds single-stranded (ss) DNA and RNA, but not double-stranded (ds) DNA. This is Protein PLASTID TRANSCRIPTIONALLY ACTIVE 12, chloroplastic from Zea mays (Maize).